Reading from the N-terminus, the 142-residue chain is Hemoglobin subunit alpha (142 aa).

Serine 1 carries the N-acetylserine modification. Residues 1–142 form the Globin domain; the sequence is SLSDKDKAAV…VALALAERYR (142 aa). O2 is bound at residue histidine 59. A heme b-binding site is contributed by histidine 88.

This sequence belongs to the globin family. In terms of assembly, hb1 is a heterotetramer of two alpha chains and two beta-1 chains, while Hb2 is a heterotetramer of two alpha chains and two beta-2 chains. In terms of tissue distribution, red blood cells.

Involved in oxygen transport from gills to the various peripheral tissues. This chain is Hemoglobin subunit alpha (hba), found in Cygnodraco mawsoni (Antarctic dragonfish).